The chain runs to 200 residues: Outer-membrane lipoprotein LolB (200 aa).

The N-terminal stretch at 1–18 (MRRGRLLIAGLAALVLSA) is a signal peptide. The N-palmitoyl cysteine moiety is linked to residue Cys19. The S-diacylglycerol cysteine moiety is linked to residue Cys19.

It belongs to the LolB family. As to quaternary structure, monomer.

Its subcellular location is the cell outer membrane. Functionally, plays a critical role in the incorporation of lipoproteins in the outer membrane after they are released by the LolA protein. This Alkalilimnicola ehrlichii (strain ATCC BAA-1101 / DSM 17681 / MLHE-1) protein is Outer-membrane lipoprotein LolB.